Here is a 260-residue protein sequence, read N- to C-terminus: Exosome complex component Rrp4 (260 aa).

The 70-residue stretch at 59-128 folds into the S1 motif domain; that stretch reads NDVVIGIVIV…NSMKVELALR (70 aa). The KH domain occupies 136–194; that stretch reads KTGQIVEVEPVKVPRVIGHGGSMISMLKKETNCSIFVGQNGRIWIDGKDDDVELLSKAL.

It belongs to the RRP4 family. Component of the archaeal exosome complex. Forms a trimer of Rrp4 and/or Csl4 subunits. The trimer associates with a hexameric ring-like arrangement composed of 3 Rrp41-Rrp42 heterodimers.

The protein localises to the cytoplasm. Non-catalytic component of the exosome, which is a complex involved in RNA degradation. Increases the RNA binding and the efficiency of RNA degradation. Confers strong poly(A) specificity to the exosome. The protein is Exosome complex component Rrp4 of Methanosarcina barkeri (strain Fusaro / DSM 804).